A 361-amino-acid chain; its full sequence is Phosphate acyltransferase (361 aa).

A disordered region spans residues 340–361; it reads VPADGAATEQGPTPRRIAPPRT.

It belongs to the PlsX family. As to quaternary structure, homodimer. Probably interacts with PlsY.

The protein resides in the cytoplasm. It catalyses the reaction a fatty acyl-[ACP] + phosphate = an acyl phosphate + holo-[ACP]. The protein operates within lipid metabolism; phospholipid metabolism. Its function is as follows. Catalyzes the reversible formation of acyl-phosphate (acyl-PO(4)) from acyl-[acyl-carrier-protein] (acyl-ACP). This enzyme utilizes acyl-ACP as fatty acyl donor, but not acyl-CoA. The sequence is that of Phosphate acyltransferase from Anaeromyxobacter dehalogenans (strain 2CP-1 / ATCC BAA-258).